Here is a 346-residue protein sequence, read N- to C-terminus: Probable alpha-1,2-galactosyltransferase gmh2 (346 aa).

The Cytoplasmic portion of the chain corresponds to 1 to 11 (MALMLSRIPRR). Residues 12 to 32 (FFFLFLTVGLIAGAFLYSLIY) form a helical; Signal-anchor for type II membrane protein membrane-spanning segment. At 33–346 (FVDVDLVSKV…LWQKFYALID (314 aa)) the chain is on the lumenal side. Residues asparagine 64, asparagine 142, and asparagine 224 are each glycosylated (N-linked (GlcNAc...) asparagine).

It belongs to the glycosyltransferase 34 family.

The protein localises to the golgi apparatus membrane. The chain is Probable alpha-1,2-galactosyltransferase gmh2 (gmh2) from Schizosaccharomyces pombe (strain 972 / ATCC 24843) (Fission yeast).